The primary structure comprises 394 residues: GTPase Era, mitochondrial (394 aa).

The Era-type G domain occupies 32–280 (KCLQLAVIGA…RDHLMSISPQ (249 aa)). Residues 40–47 (GAPNVGKS) are G1. 40–47 (GAPNVGKS) contacts GTP. Residues 66–70 (DTTTR) form a G2 region. Residues 87 to 90 (DSPG) are G3. GTP contacts are provided by residues 87 to 91 (DSPGA) and 160 to 163 (NKID). The interval 160–163 (NKID) is G4. Residues 259–261 (VSS) form a G5 region.

This sequence belongs to the TRAFAC class TrmE-Era-EngA-EngB-Septin-like GTPase superfamily. Era GTPase family.

The protein resides in the mitochondrion matrix. It localises to the mitochondrion inner membrane. In terms of biological role, probable GTPase that plays a role in the mitochondrial ribosomal small subunit assembly. Specifically binds the 12S mitochondrial rRNA (12S mt-rRNA) to a 33 nucleotide section delineating the 3' terminal stem-loop region. May act as a chaperone that protects the 12S mt-rRNA on the 28S mitoribosomal subunit during ribosomal small subunit assembly. May play a role in positively regulating mitochondrial function. Plays a role in fertility. The chain is GTPase Era, mitochondrial from Caenorhabditis elegans.